A 672-amino-acid polypeptide reads, in one-letter code: MKKLHKILLGLSLPASLAPLSGFISTDADNSQFSLKKSSTEIKGTQSIHLLNLGESLTEEIKEAQKRTPETSFASFKQKFPNKESFVKGFQPIDVYNLLSGWKDAISSFLDKVVELQKKIEEANKIFNTNIGNQIDLPEDENPNVLNVLGSYGGEGFFPTLGKNGLNLPQQIFENFTDFKVVSHKIHDFQVSLVGERDIIKNDKVRFSYAVQIPLNLELLVNNQKVTFNITVDLRTNNFSTQETFNELFNKCIGPVNWQFFSRVKVDKLHYDQTDATHLANTLLQDQFNALNLDLEKSIYDLELPRLEAEFQQKYVDPLIEKKQRQKAEWEEAERIRKEEEEKHQKELEEQQRIQAEKAKNDEQLQKPQTELKKALGGIDSFVEFFTNNDLRLKLGYTKEDNVRTRAGLFRALEVSFGNYRAWTFYITLLGWKDTTEKIFKKAKWQDIRDDEKFRKAFGLSPKATEKDVGKVTNPGYGYQGIYIKDSLRDGIAKYSDSTVSEPKNVKVSLPGTVGDNEEGKIWIASHNFRQNHEWGAGEKFKYSAYRFKFDVTVDYDVEVSAKWWTWAFRGSIPGYWRGKFKVTYSFDGVVPSWKYGHIQVRTPQYSFNKQEQKILFVPHAIQKIAAEGSNLDLINPFLKDQKLDEFEHYHPDLTKPLDLVAYLLYAITTRS.

Belongs to the MG032/MG096/MG288 family.

This is an uncharacterized protein from Mycoplasma pneumoniae (strain ATCC 29342 / M129 / Subtype 1) (Mycoplasmoides pneumoniae).